A 303-amino-acid polypeptide reads, in one-letter code: Probable WRKY transcription factor 30 (303 aa).

Residues 65-92 form a disordered region; that stretch reads DQVSQGGGSPKSDDSDQEPLVIKSSKKS. Residues 107–175 constitute a DNA-binding region (WRKY); the sequence is GVDRTLDDGF…YRGIHSCSQA (69 aa). A compositionally biased stretch (low complexity) spans 266–278; that stretch reads SGSASHSASNSPS. The segment at 266–291 is disordered; it reads SGSASHSASNSPSTVPLESPFESYDP.

This sequence belongs to the WRKY group III family. Interacts with WRKY53, WRKY54 and WRKY70.

It is found in the nucleus. Functionally, transcription factor. Interacts specifically with the W box (5'-(T)TGAC[CT]-3'), a frequently occurring elicitor-responsive cis-acting element. The sequence is that of Probable WRKY transcription factor 30 from Arabidopsis thaliana (Mouse-ear cress).